The primary structure comprises 192 residues: A-type ATP synthase subunit E (192 aa).

Belongs to the V-ATPase E subunit family. As to quaternary structure, has multiple subunits with at least A(3), B(3), C, D, E, F, H, I and proteolipid K(x).

It localises to the cell membrane. Its function is as follows. Component of the A-type ATP synthase that produces ATP from ADP in the presence of a proton gradient across the membrane. The protein is A-type ATP synthase subunit E of Methanoculleus marisnigri (strain ATCC 35101 / DSM 1498 / JR1).